The following is a 315-amino-acid chain: Ribosomal RNA small subunit methyltransferase H (315 aa).

S-adenosyl-L-methionine is bound by residues 42–44 (GGH), D59, F96, D108, and Q115.

It belongs to the methyltransferase superfamily. RsmH family.

The protein localises to the cytoplasm. It carries out the reaction cytidine(1402) in 16S rRNA + S-adenosyl-L-methionine = N(4)-methylcytidine(1402) in 16S rRNA + S-adenosyl-L-homocysteine + H(+). Its function is as follows. Specifically methylates the N4 position of cytidine in position 1402 (C1402) of 16S rRNA. The polypeptide is Ribosomal RNA small subunit methyltransferase H (Gemmatimonas aurantiaca (strain DSM 14586 / JCM 11422 / NBRC 100505 / T-27)).